A 278-amino-acid polypeptide reads, in one-letter code: Serine/arginine-rich splicing factor SR34B (278 aa).

Residues 7–82 (RTIYVGNLPG…HHLRVELAHG (76 aa)) enclose the RRM 1 domain. Residues 81–91 (HGGRRSSHDAR) show a composition bias toward basic and acidic residues. Disordered regions lie at residues 81 to 121 (HGGR…SEYR) and 192 to 263 (EYDS…RSLS). Gly residues predominate over residues 95–107 (SGRGRGGRGGGDG). Composition is skewed to basic and acidic residues over residues 108–120 (GGRERGPSRRSEY) and 192–201 (EYDSRRDSRS). The 76-residue stretch at 120–195 (YRVVVSGLPS…EYVRVREYDS (76 aa)) folds into the RRM 2 domain. A phosphoserine mark is found at S201, S203, S225, S231, S233, S242, S250, S259, and S263. Over residues 207-243 (SYSKSRSRGRSPSRSRSRSRSRSKSRSPKAKSLRRSP) the composition is skewed to basic residues.

It belongs to the splicing factor SR family. SR subfamily. Component of the spliceosome.

Its subcellular location is the nucleus speckle. It localises to the nucleus. It is found in the nucleoplasm. In terms of biological role, probably involved in intron recognition and spliceosome assembly. The polypeptide is Serine/arginine-rich splicing factor SR34B (SR34B) (Arabidopsis thaliana (Mouse-ear cress)).